We begin with the raw amino-acid sequence, 426 residues long: Lipid droplet localized protein (426 aa).

The helical transmembrane segment at 278–298 threads the bilayer; that stretch reads FYGYLIGLWIMFLSIFVKYPF.

This sequence belongs to the saccharopine dehydrogenase family.

Its subcellular location is the membrane. It localises to the lipid droplet. The chain is Lipid droplet localized protein from Caenorhabditis elegans.